Consider the following 449-residue polypeptide: 23S rRNA (uracil(1939)-C(5))-methyltransferase RlmD (449 aa).

A TRAM domain is found at S12–K70. Residues C83, C89, C92, and C170 each coordinate [4Fe-4S] cluster. S-adenosyl-L-methionine contacts are provided by Q282, F311, N316, E332, D359, and D379. C405 serves as the catalytic Nucleophile.

The protein belongs to the class I-like SAM-binding methyltransferase superfamily. RNA M5U methyltransferase family. RlmD subfamily.

It catalyses the reaction uridine(1939) in 23S rRNA + S-adenosyl-L-methionine = 5-methyluridine(1939) in 23S rRNA + S-adenosyl-L-homocysteine + H(+). In terms of biological role, catalyzes the formation of 5-methyl-uridine at position 1939 (m5U1939) in 23S rRNA. This is 23S rRNA (uracil(1939)-C(5))-methyltransferase RlmD from Shewanella sp. (strain ANA-3).